The primary structure comprises 83 residues: Cell division topological specificity factor (83 aa).

It belongs to the MinE family.

Prevents the cell division inhibition by proteins MinC and MinD at internal division sites while permitting inhibition at polar sites. This ensures cell division at the proper site by restricting the formation of a division septum at the midpoint of the long axis of the cell. The polypeptide is Cell division topological specificity factor (Buchnera aphidicola subsp. Schizaphis graminum (strain Sg)).